The chain runs to 153 residues: Nucleoside diphosphate kinase (153 aa).

K13, F61, R89, T95, R106, and N116 together coordinate ATP. The residue at position 95 (T95) is a Phosphothreonine. The Pros-phosphohistidine intermediate role is filled by H119.

The protein belongs to the NDK family. In terms of assembly, homohexamer and homotetramer. Interacts with TOM40 preferentially in an unfolded, unphosphorylated form. Mg(2+) serves as cofactor. Post-translationally, the N-terminus is blocked.

It localises to the cytoplasm. The protein localises to the mitochondrion intermembrane space. It carries out the reaction a 2'-deoxyribonucleoside 5'-diphosphate + ATP = a 2'-deoxyribonucleoside 5'-triphosphate + ADP. The enzyme catalyses a ribonucleoside 5'-diphosphate + ATP = a ribonucleoside 5'-triphosphate + ADP. Functionally, major role in the synthesis of nucleoside triphosphates other than ATP. The ATP gamma phosphate is transferred to the NDP beta phosphate via a ping-pong mechanism, using a phosphorylated active-site intermediate. Required for repair of UV radiation- and etoposide-induced DNA damage. This chain is Nucleoside diphosphate kinase (YNK1), found in Saccharomyces cerevisiae (strain ATCC 204508 / S288c) (Baker's yeast).